The sequence spans 87 residues: NAD(P)H-quinone oxidoreductase subunit O (87 aa).

The span at 1-10 (MSEQTGKVDD) shows a compositional bias: basic and acidic residues. Positions 1–26 (MSEQTGKVDDSQSPPKVQKKLRKGDL) are disordered.

This sequence belongs to the complex I NdhO subunit family. NDH-1 can be composed of about 15 different subunits; different subcomplexes with different compositions have been identified which probably have different functions.

It is found in the cellular thylakoid membrane. It catalyses the reaction a plastoquinone + NADH + (n+1) H(+)(in) = a plastoquinol + NAD(+) + n H(+)(out). It carries out the reaction a plastoquinone + NADPH + (n+1) H(+)(in) = a plastoquinol + NADP(+) + n H(+)(out). NDH-1 shuttles electrons from an unknown electron donor, via FMN and iron-sulfur (Fe-S) centers, to quinones in the respiratory and/or the photosynthetic chain. The immediate electron acceptor for the enzyme in this species is believed to be plastoquinone. Couples the redox reaction to proton translocation, and thus conserves the redox energy in a proton gradient. Cyanobacterial NDH-1 also plays a role in inorganic carbon-concentration. The sequence is that of NAD(P)H-quinone oxidoreductase subunit O from Prochlorococcus marinus (strain NATL1A).